A 601-amino-acid chain; its full sequence is Sestrin homolog (601 aa).

A compositionally biased stretch (polar residues) spans 1-11 (MISMGMTSKGQ). The segment at 1–58 (MISMGMTSKGQNVDGAPAGNSSSEWIISSSSSPFQANKRYSLDPPFGSDYSPPASPQN) is disordered. A glycan (N-linked (GlcNAc...) asparagine) is linked at asparagine 20. The span at 21–32 (SSSEWIISSSSS) shows a compositional bias: low complexity. N-linked (GlcNAc...) asparagine glycans are attached at residues asparagine 322 and asparagine 330. Residues 355–425 (RRSQQQDDDD…DSSSSTLSQS (71 aa)) are disordered. Over residues 368–379 (LHDRQQDFHNAG) the composition is skewed to basic and acidic residues. A compositionally biased stretch (low complexity) spans 380–425 (DDSQSSNNNTTTTTTTTTTTTTTTNTNTTSNSAGGGDSSSSTLSQS). Residues asparagine 387, asparagine 388, asparagine 406, asparagine 438, and asparagine 499 are each glycosylated (N-linked (GlcNAc...) asparagine).

Belongs to the sestrin family.

It is found in the nucleus. Its subcellular location is the cytoplasm. May function as a negative feedback regulator of TOR function. The polypeptide is Sestrin homolog (Dictyostelium discoideum (Social amoeba)).